The primary structure comprises 545 residues: CTP synthase (545 aa).

Positions 1–266 (MTHFIFVTGG…DDLICERFGF (266 aa)) are amidoligase domain. CTP is bound at residue S13. S13 contributes to the UTP binding site. Residues 14–19 (SLGKGI) and D71 contribute to the ATP site. Residues D71 and E140 each contribute to the Mg(2+) site. Residues 147 to 149 (DIE), 187 to 192 (KTKPTQ), and K223 each bind CTP. UTP contacts are provided by residues 187–192 (KTKPTQ) and K223. 239–241 (KDA) contacts ATP. A Glutamine amidotransferase type-1 domain is found at 292 to 543 (RVAMVGKYVE…IDAAKTQHQK (252 aa)). Position 353 (G353) interacts with L-glutamine. The active-site Nucleophile; for glutamine hydrolysis is C380. L-glutamine contacts are provided by residues 381 to 384 (LGMQ), E404, and R471. Residues H516 and E518 contribute to the active site.

This sequence belongs to the CTP synthase family. Homotetramer.

The catalysed reaction is UTP + L-glutamine + ATP + H2O = CTP + L-glutamate + ADP + phosphate + 2 H(+). The enzyme catalyses L-glutamine + H2O = L-glutamate + NH4(+). It carries out the reaction UTP + NH4(+) + ATP = CTP + ADP + phosphate + 2 H(+). The protein operates within pyrimidine metabolism; CTP biosynthesis via de novo pathway; CTP from UDP: step 2/2. Allosterically activated by GTP, when glutamine is the substrate; GTP has no effect on the reaction when ammonia is the substrate. The allosteric effector GTP functions by stabilizing the protein conformation that binds the tetrahedral intermediate(s) formed during glutamine hydrolysis. Inhibited by the product CTP, via allosteric rather than competitive inhibition. Its function is as follows. Catalyzes the ATP-dependent amination of UTP to CTP with either L-glutamine or ammonia as the source of nitrogen. Regulates intracellular CTP levels through interactions with the four ribonucleotide triphosphates. This chain is CTP synthase, found in Acinetobacter baumannii (strain AB307-0294).